The following is a 385-amino-acid chain: SH3 domain-binding protein 5-like (385 aa).

The interval 1-58 (MAELRQIPGGRETPQGELRPEVVEDEVPRSPVAEEPGGGGSNSSEAKLSPREEEELDP) is disordered. Thr-13 is modified (phosphothreonine). A compositionally biased stretch (basic and acidic residues) spans 18-28 (LRPEVVEDEVP). Residues Ser-30 and Ser-49 each carry the phosphoserine modification. 2 coiled-coil regions span residues 59–140 (RIQE…YERA) and 169–272 (WQEM…EQIH). The segment at 272–328 (HARRRGQPAHTPGQRRSSPVGAEAGPDGGEDADSGIIEGAEGGGLEEGVSLGPGAAP) is disordered. Over residues 318 to 328 (EGVSLGPGAAP) the composition is skewed to low complexity. Residues Ser-343, Ser-350, Ser-358, and Ser-362 each carry the phosphoserine modification. A disordered region spans residues 359–385 (DHTSLDGQELGPRSGGRGGRHQRSISL). Residues 376–385 (GGRHQRSISL) are compositionally biased toward basic residues.

Belongs to the SH3BP5 family.

Functions as a guanine nucleotide exchange factor (GEF) for RAB11A. In Bos taurus (Bovine), this protein is SH3 domain-binding protein 5-like (SH3BP5L).